A 189-amino-acid polypeptide reads, in one-letter code: Heme-binding protein 1 (189 aa).

Belongs to the HEBP family. Monomer.

The protein localises to the cytoplasm. May bind free porphyrinogens that may be present in the cell and thus facilitate removal of these potentially toxic compound. Binds with a high affinity to one molecule of heme or porphyrins. It binds metalloporphyrins, free porphyrins and N-methylprotoporphyrin with similar affinities. The sequence is that of Heme-binding protein 1 (HEBP1) from Sus scrofa (Pig).